Reading from the N-terminus, the 283-residue chain is D-alanine aminotransferase (283 aa).

Tyr32 provides a ligand contact to substrate. Arg51 contacts pyridoxal 5'-phosphate. Positions 99 and 101 each coordinate substrate. Lys146 (proton acceptor) is an active-site residue. At Lys146 the chain carries N6-(pyridoxal phosphate)lysine. Glu178 serves as a coordination point for pyridoxal 5'-phosphate.

It belongs to the class-IV pyridoxal-phosphate-dependent aminotransferase family. As to quaternary structure, homodimer. Requires pyridoxal 5'-phosphate as cofactor.

It catalyses the reaction D-alanine + 2-oxoglutarate = D-glutamate + pyruvate. In terms of biological role, acts on the D-isomers of alanine, leucine, aspartate, glutamate, aminobutyrate, norvaline and asparagine. The enzyme transfers an amino group from a substrate D-amino acid to the pyridoxal phosphate cofactor to form pyridoxamine and an alpha-keto acid in the first half-reaction. The second-half reaction is the reverse of the first, transferring the amino group from the pyridoxamine to a second alpha-keto acid to form the product D-amino acid via a ping-pong mechanism. This is an important process in the formation of D-alanine and D-glutamate, which are essential bacterial cell wall components. In Bacillus sp. (strain YM-1), this protein is D-alanine aminotransferase (dat).